The primary structure comprises 239 residues: Octanoyltransferase (239 aa).

Residues 59 to 239 (PFSPQAVWLL…KRRFKLNWEK (181 aa)) enclose the BPL/LPL catalytic domain. Residues 101–108 (RGGEVTHH), 168–170 (SIG), and 181–183 (GFS) each bind substrate. The active-site Acyl-thioester intermediate is the C199.

This sequence belongs to the LipB family.

It localises to the cytoplasm. It catalyses the reaction octanoyl-[ACP] + L-lysyl-[protein] = N(6)-octanoyl-L-lysyl-[protein] + holo-[ACP] + H(+). It participates in protein modification; protein lipoylation via endogenous pathway; protein N(6)-(lipoyl)lysine from octanoyl-[acyl-carrier-protein]: step 1/2. In terms of biological role, catalyzes the transfer of endogenously produced octanoic acid from octanoyl-acyl-carrier-protein onto the lipoyl domains of lipoate-dependent enzymes. Lipoyl-ACP can also act as a substrate although octanoyl-ACP is likely to be the physiological substrate. The protein is Octanoyltransferase of Prochlorococcus marinus (strain NATL2A).